We begin with the raw amino-acid sequence, 892 residues long: Translation initiation factor IF-2 (892 aa).

The segment at 66–305 is disordered; sequence TRSTLNIPGT…SLQQGFQKPA (240 aa). Polar residues predominate over residues 68-82; sequence STLNIPGTGGKSKSV. 2 stretches are compositionally biased toward basic and acidic residues: residues 93–159 and 166–216; these read VKRD…KDKV and DMTK…EENK. Residues 254 to 269 show a composition bias toward basic residues; the sequence is GRGRNAKAARPAKKGK. Over residues 270 to 282 the composition is skewed to basic and acidic residues; that stretch reads HAESKADREEARA. Residues 391–560 enclose the tr-type G domain; that stretch reads PRAPVVTIMG…LLQAEVLELK (170 aa). The tract at residues 400–407 is G1; sequence GHVDHGKT. Residue 400–407 coordinates GTP; that stretch reads GHVDHGKT. The tract at residues 425–429 is G2; that stretch reads GITQH. Positions 446–449 are G3; it reads DTPG. Residues 446-450 and 500-503 each bind GTP; these read DTPGH and NKID. Positions 500–503 are G4; that stretch reads NKID. The tract at residues 536 to 538 is G5; it reads SAK.

The protein belongs to the TRAFAC class translation factor GTPase superfamily. Classic translation factor GTPase family. IF-2 subfamily.

The protein localises to the cytoplasm. Its function is as follows. One of the essential components for the initiation of protein synthesis. Protects formylmethionyl-tRNA from spontaneous hydrolysis and promotes its binding to the 30S ribosomal subunits. Also involved in the hydrolysis of GTP during the formation of the 70S ribosomal complex. The sequence is that of Translation initiation factor IF-2 from Salmonella typhi.